The following is a 156-amino-acid chain: MKLQLIAVGTRMPDWVTRGFEEYQRRFPRDMALELIEIPAGKRGKNADIVRILQKEGEQMLAAIPKGNHIVTLDLPGKNWTTPELATAMNKWQLDGRDVSLLVGGPEGLAPACKEAAHQSWCLSALTLPHPLVRIVVAESLYRAWSVNTNHPYHRE.

S-adenosyl-L-methionine is bound by residues L73, G104, and 123–128 (LSALTL).

Belongs to the RNA methyltransferase RlmH family. As to quaternary structure, homodimer.

It is found in the cytoplasm. It catalyses the reaction pseudouridine(1915) in 23S rRNA + S-adenosyl-L-methionine = N(3)-methylpseudouridine(1915) in 23S rRNA + S-adenosyl-L-homocysteine + H(+). Specifically methylates the pseudouridine at position 1915 (m3Psi1915) in 23S rRNA. The polypeptide is Ribosomal RNA large subunit methyltransferase H (Shewanella sp. (strain ANA-3)).